The following is a 338-amino-acid chain: Glycerol-3-phosphate dehydrogenase [NAD(P)+] (338 aa).

NADPH is bound by residues Ser13, Trp14, and Lys108. 3 residues coordinate sn-glycerol 3-phosphate: Lys108, Gly139, and Ser141. An NADPH-binding site is contributed by Ala143. Lys194, Asp247, Ser257, Arg258, and Asn259 together coordinate sn-glycerol 3-phosphate. Lys194 (proton acceptor) is an active-site residue. Arg258 contributes to the NADPH binding site. 2 residues coordinate NADPH: Val282 and Glu284.

The protein belongs to the NAD-dependent glycerol-3-phosphate dehydrogenase family.

Its subcellular location is the cytoplasm. The enzyme catalyses sn-glycerol 3-phosphate + NAD(+) = dihydroxyacetone phosphate + NADH + H(+). It catalyses the reaction sn-glycerol 3-phosphate + NADP(+) = dihydroxyacetone phosphate + NADPH + H(+). It functions in the pathway membrane lipid metabolism; glycerophospholipid metabolism. Functionally, catalyzes the reduction of the glycolytic intermediate dihydroxyacetone phosphate (DHAP) to sn-glycerol 3-phosphate (G3P), the key precursor for phospholipid synthesis. This chain is Glycerol-3-phosphate dehydrogenase [NAD(P)+], found in Streptococcus suis (strain 98HAH33).